The following is a 672-amino-acid chain: Spermatid perinuclear RNA-binding protein (672 aa).

Residues 5–363 (RSFANDDRHV…ALKRPFEDGL (359 aa)) form the DZF domain. Disordered stretches follow at residues 52–73 (TNKG…GENY) and 349–371 (GAGS…DPNK). Residues 357–371 (RPFEDGLGDDKDPNK) show a composition bias toward basic and acidic residues. Residues 387–453 (DLMNALMRLN…AVKVLQAMGY (67 aa)) enclose the DRBM 1 domain. Positions 466-476 (SDEKSDNESKN) are enriched in basic and acidic residues. Residues 466 to 499 (SDEKSDNESKNETVSSNSSNNTGNSTTETSSTLE) form a disordered region. A compositionally biased stretch (low complexity) spans 477 to 497 (ETVSSNSSNNTGNSTTETSST). Residues 510–576 (SGKNPVMELN…ALAALEKLFS (67 aa)) form the DRBM 2 domain. Arginine 612 and arginine 617 each carry asymmetric dimethylarginine.

Interacts with EIF2AK2. Associates with microtubules; it is unsure whether such interaction is direct or indirect.

The protein localises to the cytoplasm. Functionally, involved in spermatogenesis and sperm function. Plays a role in regulation of cell growth. Binds to double-stranded DNA and RNA. Binds most efficiently to poly(I:C) RNA than to poly(dI:dC) DNA. Binds also to single-stranded poly(G) RNA. Binds non-specifically to the mRNA PRM1 3'-UTR and adenovirus VA RNA. The sequence is that of Spermatid perinuclear RNA-binding protein (STRBP) from Pongo abelii (Sumatran orangutan).